A 1152-amino-acid chain; its full sequence is Calcium-activated potassium channel subunit alpha-1 (1152 aa).

Residues 1 to 37 are disordered; the sequence is MSSNIHANHLSLDASSSSSSSSSSSSSSSSSSSSVHE. At 1–60 the chain is on the extracellular side; that stretch reads MSSNIHANHLSLDASSSSSSSSSSSSSSSSSSSSVHEPKMDALIIPVTMEVPCDSRGQRM. Residues 15 to 34 are compositionally biased toward low complexity; the sequence is SSSSSSSSSSSSSSSSSSSS. The chain crosses the membrane as a helical span at residues 61–81; that stretch reads WWAFLASSMVTFFGGLFIILL. At 82-152 the chain is on the cytoplasmic side; it reads WRTLKYLWTV…MISAQTLTGR (71 aa). S-palmitoyl cysteine attachment occurs at residues Cys92, Cys93, and Cys95. A helical membrane pass occupies residues 153-173; that stretch reads VLVVLVFALSIGALVIYFIDS. At 174–188 the chain is on the extracellular side; that stretch reads SNPIESCQNFYKDFT. The chain crosses the membrane as a helical span at residues 189 to 209; that stretch reads LQIDMAFNVFFLLYFGLRFIA. The Cytoplasmic portion of the chain corresponds to 210 to 213; the sequence is ANDK. A helical transmembrane segment spans residues 214–234; that stretch reads LWFWLEVNSVVDFFTVPPVFV. Residues 235–238 lie on the Extracellular side of the membrane; the sequence is SVYL. A helical; Voltage-sensor transmembrane segment spans residues 239 to 259; that stretch reads NRSWLGLRFLRALRLIQFSEI. Topologically, residues 260 to 274 are cytoplasmic; the sequence is LQFLNILKTSNSIKL. A helical transmembrane segment spans residues 275–295; the sequence is VNLLSIFISTWLTAAGFIHLV. Residues 296-309 lie on the Extracellular side of the membrane; it reads ENSGDPWENFQNNQ. The pore-forming intramembrane region spans 310-332; it reads ALTYWECVYLLMVTMSTVGYGDV. The short motif at 326–329 is the Selectivity for potassium element; it reads TVGY. Residues 333–341 are Extracellular-facing; that stretch reads YAKTTLGRL. Residues 342 to 362 traverse the membrane as a helical segment; sequence FMVFFILGGLAMFASYVPEII. The Cytoplasmic portion of the chain corresponds to 363 to 1152; it reads ELIGNRKKYG…KQKYVQEERL (790 aa). An RCK N-terminal 1 domain is found at 381–523; sequence RKHIVVCGHI…WNWKEGDDAI (143 aa). Glu413, Gln436, and Glu438 together coordinate Mg(2+). Residues 530–550 form a segment S7 region; it reads LGFIAQSCLAQGLSTMLANLF. The segment S8 stretch occupies residues 587–607; the sequence is LSFPTVCELCFVKLKLLMIAI. The tract at residues 651-655 is heme-binding motif; the sequence is CKACH. Residues 675–703 form a disordered region; sequence EQPSTLSPKKKQRNGGMRNSPSSSPKLMR. Position 679 is a phosphothreonine (Thr679). 3 positions are modified to phosphoserine: Ser681, Ser694, and Ser698. The tract at residues 753-773 is segment S9; the sequence is VLSGHVVVCIFGDVSSALIGL. The RCK N-terminal 2 domain occupies 755 to 899; the sequence is SGHVVVCIFG…MDRSSPDNSP (145 aa). Thr886 is modified (phosphothreonine). 2 positions are modified to phosphoserine: Ser894 and Ser898. Positions 919–941 match the Calcium bowl motif; sequence TELVNDTNVQFLDQDDDDDPDTE. 4 residues coordinate Ca(2+): Gln928, Asp931, Asp934, and Asp936. The interval 948 to 968 is segment S10; the sequence is FACGTAFAVSVLDSLMSATYF. The span at 1102-1127 shows a compositional bias: low complexity; the sequence is RASLSHSSHSSQSSSKKSSSVHSIPS. The segment at 1102–1152 is disordered; it reads RASLSHSSHSSQSSSKKSSSVHSIPSTANRQNRPKSRESRDKQKYVQEERL. The segment covering 1136 to 1152 has biased composition (basic and acidic residues); that stretch reads KSRESRDKQKYVQEERL. Residues Ser1137 and Ser1140 each carry the phosphoserine modification.

Belongs to the potassium channel family. Calcium-activated (TC 1.A.1.3) subfamily. KCa1.1/KCNMA1 sub-subfamily. In terms of assembly, homotetramer; which constitutes the calcium-activated potassium channel. Interacts with beta subunits KCNMB1, KCNMB2, KCNMB3 and KCNMB4. Interacts with gamma subunits LRRC26, LRRC38, LRRC52 and LRRC55. Beta and gamma subunits are accessory, and modulate its activity. Interacts with RAB11B. In terms of processing, phosphorylated. Phosphorylation by kinases such as PKA and/or PKG. In smooth muscles, phosphorylation affects its activity. Post-translationally, palmitoylation by ZDHHC22 and ZDHHC23 within the intracellular linker between the S0 and S1 transmembrane domains regulates localization to the plasma membrane. Depalmitoylated by LYPLA1 and LYPLAL1, leading to retard exit from the trans-Golgi network.

It localises to the cell membrane. It carries out the reaction K(+)(in) = K(+)(out). With respect to regulation, ethanol and carbon monoxide-bound heme increase channel activation. Heme inhibits channel activation. Functionally, potassium channel activated by both membrane depolarization or increase in cytosolic Ca(2+) that mediates export of K(+). It is also activated by the concentration of cytosolic Mg(2+). Its activation dampens the excitatory events that elevate the cytosolic Ca(2+) concentration and/or depolarize the cell membrane. It therefore contributes to repolarization of the membrane potential. Plays a key role in controlling excitability in a number of systems, such as regulation of the contraction of smooth muscle, the tuning of hair cells in the cochlea, regulation of transmitter release, and innate immunity. In smooth muscles, its activation by high level of Ca(2+), caused by ryanodine receptors in the sarcoplasmic reticulum, regulates the membrane potential. In cochlea cells, its number and kinetic properties partly determine the characteristic frequency of each hair cell and thereby helps to establish a tonotopic map. Kinetics of KCNMA1 channels are determined by alternative splicing, phosphorylation status and its combination with modulating beta subunits. Highly sensitive to both iberiotoxin (IbTx) and charybdotoxin (CTX). The protein is Calcium-activated potassium channel subunit alpha-1 (KCNMA1) of Sus scrofa (Pig).